The primary structure comprises 416 residues: 4-hydroxy-3-methylbut-2-en-1-yl diphosphate synthase (flavodoxin) (416 aa).

[4Fe-4S] cluster-binding residues include Cys-304, Cys-307, Cys-350, and Glu-357.

It belongs to the IspG family. [4Fe-4S] cluster is required as a cofactor.

It carries out the reaction (2E)-4-hydroxy-3-methylbut-2-enyl diphosphate + oxidized [flavodoxin] + H2O + 2 H(+) = 2-C-methyl-D-erythritol 2,4-cyclic diphosphate + reduced [flavodoxin]. Its pathway is isoprenoid biosynthesis; isopentenyl diphosphate biosynthesis via DXP pathway; isopentenyl diphosphate from 1-deoxy-D-xylulose 5-phosphate: step 5/6. Its function is as follows. Converts 2C-methyl-D-erythritol 2,4-cyclodiphosphate (ME-2,4cPP) into 1-hydroxy-2-methyl-2-(E)-butenyl 4-diphosphate. This is 4-hydroxy-3-methylbut-2-en-1-yl diphosphate synthase (flavodoxin) from Rhizobium leguminosarum bv. trifolii (strain WSM2304).